The sequence spans 486 residues: Aspartyl/glutamyl-tRNA(Asn/Gln) amidotransferase subunit B (486 aa).

The protein belongs to the GatB/GatE family. GatB subfamily. In terms of assembly, heterotrimer of A, B and C subunits.

The catalysed reaction is L-glutamyl-tRNA(Gln) + L-glutamine + ATP + H2O = L-glutaminyl-tRNA(Gln) + L-glutamate + ADP + phosphate + H(+). It carries out the reaction L-aspartyl-tRNA(Asn) + L-glutamine + ATP + H2O = L-asparaginyl-tRNA(Asn) + L-glutamate + ADP + phosphate + 2 H(+). Its function is as follows. Allows the formation of correctly charged Asn-tRNA(Asn) or Gln-tRNA(Gln) through the transamidation of misacylated Asp-tRNA(Asn) or Glu-tRNA(Gln) in organisms which lack either or both of asparaginyl-tRNA or glutaminyl-tRNA synthetases. The reaction takes place in the presence of glutamine and ATP through an activated phospho-Asp-tRNA(Asn) or phospho-Glu-tRNA(Gln). The chain is Aspartyl/glutamyl-tRNA(Asn/Gln) amidotransferase subunit B from Janthinobacterium sp. (strain Marseille) (Minibacterium massiliensis).